A 497-amino-acid polypeptide reads, in one-letter code: Guanosine-5'-triphosphate,3'-diphosphate pyrophosphatase (497 aa).

Belongs to the GppA/Ppx family. GppA subfamily.

It carries out the reaction guanosine 3'-diphosphate 5'-triphosphate + H2O = guanosine 3',5'-bis(diphosphate) + phosphate + H(+). Its pathway is purine metabolism; ppGpp biosynthesis; ppGpp from GTP: step 2/2. In terms of biological role, catalyzes the conversion of pppGpp to ppGpp. Guanosine pentaphosphate (pppGpp) is a cytoplasmic signaling molecule which together with ppGpp controls the 'stringent response', an adaptive process that allows bacteria to respond to amino acid starvation, resulting in the coordinated regulation of numerous cellular activities. The sequence is that of Guanosine-5'-triphosphate,3'-diphosphate pyrophosphatase from Vibrio campbellii (strain ATCC BAA-1116).